The primary structure comprises 336 residues: Dihydroorotate dehydrogenase (quinone) (336 aa).

Residues 62-66 and T86 contribute to the FMN site; that span reads AGLDK. Residue K66 participates in substrate binding. 111 to 115 serves as a coordination point for substrate; that stretch reads NRMGF. FMN is bound by residues N139 and N172. Substrate is bound at residue N172. S175 serves as the catalytic Nucleophile. N177 lines the substrate pocket. FMN-binding residues include K217 and T245. 246 to 247 is a binding site for substrate; sequence NT. Residues G268, G297, and 318-319 contribute to the FMN site; that span reads YS.

It belongs to the dihydroorotate dehydrogenase family. Type 2 subfamily. In terms of assembly, monomer. FMN is required as a cofactor.

It localises to the cell membrane. The catalysed reaction is (S)-dihydroorotate + a quinone = orotate + a quinol. It functions in the pathway pyrimidine metabolism; UMP biosynthesis via de novo pathway; orotate from (S)-dihydroorotate (quinone route): step 1/1. In terms of biological role, catalyzes the conversion of dihydroorotate to orotate with quinone as electron acceptor. The chain is Dihydroorotate dehydrogenase (quinone) from Proteus mirabilis (strain HI4320).